Reading from the N-terminus, the 306-residue chain is Secretory carrier-associated membrane protein 1 (306 aa).

The tract at residues 1–66 (MAGRYDSNPF…LPPEPAAFGA (66 aa)) is disordered. Topologically, residues 1–141 (MAGRYDSNPF…EIPSHLQRMQ (141 aa)) are cytoplasmic. Gly residues predominate over residues 25–36 (KAGGQPSYGGGA). Residues 40 to 55 (PNPRNVPSVSSNSRLS) show a composition bias toward low complexity. The stretch at 72–109 (LDSSKDLKNREKELQAREAELNKREKELKRREEAAARA) forms a coiled coil. Helical transmembrane passes span 142 to 162 (YVAF…VIAV), 174 to 194 (IWLL…VLWY), 209 to 229 (FGLF…SAVA), and 257 to 277 (IFYF…IWVI). The Cytoplasmic segment spans residues 278 to 306 (QQVYMYFRGSGKAAEMKRDATRGAMRAAF).

The protein belongs to the SCAMP family.

Its subcellular location is the cell membrane. The protein resides in the cytoplasmic vesicle. It is found in the secretory vesicle membrane. Functionally, probably involved in membrane trafficking. This chain is Secretory carrier-associated membrane protein 1 (SCAMP1), found in Oryza sativa subsp. japonica (Rice).